Consider the following 426-residue polypeptide: MLDAKYIKDNLQQVAEKLATRGYQFDIAEFEAQEQKRKHLQERTQDLQSQRNTISKEIGQKKAKGEDTSDIFAKVNQINEELKIIEKELKDLQDTINQTLLSMPNLPADDVPVGKDENDNVEIRRWGTPREFHPEAPAKDHSDIGEILKMIDFKAAAKVTGSRFMVLKNKIAKLHRALSQFMLDLHTEKHGYEELYVPYLVNNDSLYGTGQLPKFAADLFKLEGDFEYSLIPTAEVPITNLVRDEILDTETLPRYYTAHTPCFRSEAGSYGRDTKGMIRQHQFEKVELVHITTADKGEESLELLTSHAEKVLQKLNLPYRVMKLCTGDMGFSAKKTYDLEVWLPSQNTYREISSCSWCGDFQARRMKARHKNPSMKKPELVHTLNGSGLAVGRTLLAIIENYQQEDGSIMVPDALIKYMGGISVIK.

The disordered stretch occupies residues 36-66 (KRKHLQERTQDLQSQRNTISKEIGQKKAKGE). The segment covering 46–55 (DLQSQRNTIS) has biased composition (polar residues). Residue 233–235 (TAE) participates in L-serine binding. Position 264–266 (264–266 (RSE)) interacts with ATP. Glu287 serves as a coordination point for L-serine. 351 to 354 (EISS) lines the ATP pocket. Ser387 is a binding site for L-serine.

This sequence belongs to the class-II aminoacyl-tRNA synthetase family. Type-1 seryl-tRNA synthetase subfamily. In terms of assembly, homodimer. The tRNA molecule binds across the dimer.

Its subcellular location is the cytoplasm. The enzyme catalyses tRNA(Ser) + L-serine + ATP = L-seryl-tRNA(Ser) + AMP + diphosphate + H(+). The catalysed reaction is tRNA(Sec) + L-serine + ATP = L-seryl-tRNA(Sec) + AMP + diphosphate + H(+). Its pathway is aminoacyl-tRNA biosynthesis; selenocysteinyl-tRNA(Sec) biosynthesis; L-seryl-tRNA(Sec) from L-serine and tRNA(Sec): step 1/1. In terms of biological role, catalyzes the attachment of serine to tRNA(Ser). Is also able to aminoacylate tRNA(Sec) with serine, to form the misacylated tRNA L-seryl-tRNA(Sec), which will be further converted into selenocysteinyl-tRNA(Sec). This chain is Serine--tRNA ligase, found in Francisella tularensis subsp. tularensis (strain FSC 198).